The sequence spans 302 residues: Glycine--tRNA ligase alpha subunit (302 aa).

This sequence belongs to the class-II aminoacyl-tRNA synthetase family. In terms of assembly, tetramer of two alpha and two beta subunits.

Its subcellular location is the cytoplasm. The enzyme catalyses tRNA(Gly) + glycine + ATP = glycyl-tRNA(Gly) + AMP + diphosphate. The chain is Glycine--tRNA ligase alpha subunit from Xanthomonas campestris pv. campestris (strain 8004).